A 477-amino-acid chain; its full sequence is MVFRSGEGHSLQWPGPEGGTGCTGPQSMLRATLLLVSLLWGARGTPSASLSPALGHPMPLTRGRYLSIGDGSVMEFEFPEESEGIIVITSQYPGQGNGTGPSPMLRVTSLDPEVLAIKNVSSIALGSGGSFVVSIRSGLPGIAPLHIQLTDPREAPPRLIEERRDFCIKVSPAEDTPITLGTDLVHFSENPILYLLLPLIFVNKCSFGCKVELEVLKGLLQNPQPMLLGLLGQFLVMPFYAFLMAKVFMLPKALALGLIITCSSPGGGGSYLFSLLLGGDVTLAISMTFISTVAATGFLPLSSAIYSRLLSIHETLHVPVSKILGTLLFIAIPIAAGVVIKSKLPKFSQLLLHVIKPFSFVLLLGGLFLAYRMGVFILAGVRLPIVLVGFTVPLVGLLVGYGLATCLKLPVAQRRTVSIEVGVQNSLLALAMLQLSLRRLQADYASQAPFLVALSGTSEMLALVIGHFIYSSVCAVP.

The interval 1–21 is disordered; it reads MVFRSGEGHSLQWPGPEGGTG. 8 consecutive transmembrane segments (helical) span residues 225–245, 253–273, 281–301, 320–340, 361–381, 383–403, 417–437, and 450–470; these read PMLL…FLMA, ALAL…SYLF, VTLA…FLPL, VSKI…GVVI, VLLL…LAGV, LPIV…GYGL, VSIE…QLSL, and FLVA…HFIY.

This sequence belongs to the bile acid:sodium symporter (BASS) (TC 2.A.28) family.

The protein resides in the membrane. The ubiquitous expression and the conservation of the sequence in distant animal species suggest that the gene codes for a protein with housekeeping functions. This Bos taurus (Bovine) protein is P3 protein (SLC10A3).